A 239-amino-acid polypeptide reads, in one-letter code: Fatty acid metabolism regulator protein (239 aa).

Residues 6–74 enclose the HTH gntR-type domain; that stretch reads QSPAGFAEEY…HGKPTKINNF (69 aa). A DNA-binding region (H-T-H motif) is located at residues 34 to 53; the sequence is ERELSELIGVTRTTLREVLQ.

In terms of assembly, homodimer.

Its subcellular location is the cytoplasm. In terms of biological role, multifunctional regulator of fatty acid metabolism. In Pectobacterium atrosepticum (strain SCRI 1043 / ATCC BAA-672) (Erwinia carotovora subsp. atroseptica), this protein is Fatty acid metabolism regulator protein.